A 146-amino-acid polypeptide reads, in one-letter code: Snaclec stejaggregin-B subunit beta-2 (146 aa).

Positions 1-23 are cleaved as a signal peptide; the sequence is MGRFIFVSFGLLVVFLSLSGSGA. In terms of domain architecture, C-type lectin spans 32 to 143; the sequence is YDLYCYRVFQ…CSQTYPFVCK (112 aa). 2 disulfides stabilise this stretch: Cys-53–Cys-142 and Cys-119–Cys-134.

Belongs to the snaclec family. Heteromultimer; disulfide-linked. Expressed by the venom gland.

The protein localises to the secreted. In terms of biological role, interferes with one step of hemostasis (modulation of platelet aggregation, or coagulation cascade, for example). The sequence is that of Snaclec stejaggregin-B subunit beta-2 from Trimeresurus stejnegeri (Chinese green tree viper).